A 1863-amino-acid polypeptide reads, in one-letter code: Calcineurin-binding protein 1 (1863 aa).

TPR repeat units lie at residues 30-65, 81-116, and 118-150; these read LSQT…ITNS, FLAL…DAKD, and VLWN…SPNN. Residues 315–361 are disordered; that stretch reads ERESGGSVKEKEPVFSEEHPQERRSTRLERLRNQKPEKEGLEFDNSK. 12 TPR repeats span residues 543–576, 602–637, 866–900, 955–988, 990–1009, 1011–1031, 1143–1183, 1226–1263, 1264–1297, 1306–1339, 1377–1412, and 1508–1541; these read ARYF…LGRE, IHEI…LAPL, INSP…EKNE, QCFF…DYQT, EQCV…SSRT, LVKL…PPDD, FESW…SQRV, VPFY…RQDW, SHAF…NPSA, ASRL…KDTA, EGVW…LAQG, and NSLR…SMSR. Residues 894–923 show a composition bias toward basic and acidic residues; that stretch reads VHVEKNENNKTESKKDGSEEQVGYREKEQS. A disordered region spans residues 894 to 941; that stretch reads VHVEKNENNKTESKKDGSEEQVGYREKEQSEQQSKQIPEHTEEVAEEE. Residues 1813-1840 form a disordered region; the sequence is KMKRGASTSSVVPSVQSGGTSEPEPAPK. Polar residues predominate over residues 1818-1832; that stretch reads ASTSSVVPSVQSGGT.

As to quaternary structure, component of the HIRA complex made of UBN1, UBN2, ASF1A, CABIN1 and HIRA. Expressed at low levels in seedlings.

The protein resides in the nucleus. May be required for replication-independent chromatin assembly. The protein is Calcineurin-binding protein 1 of Arabidopsis thaliana (Mouse-ear cress).